The sequence spans 181 residues: ECF RNA polymerase sigma factor EcfG (181 aa).

Positions 15 to 77 (VPSLRAFAIS…FRSDYRKRRR (63 aa)) are sigma-70 factor domain-2. Residues 103-155 (EEFRAALDKLPQDQREALILVGASGFSYEDAAAICGCAVGTIKSRVNRARSKL) form a sigma-70 factor domain-4 region.

This sequence belongs to the sigma-70 factor family. ECF subfamily.

In terms of biological role, sigma factors are initiation factors that promote the attachment of RNA polymerase to specific initiation sites and are then released. Regulates expression of hpnP under a variety of stresses, including high temperature, pH stress, and presence of nonionic osmolytes. The protein is ECF RNA polymerase sigma factor EcfG of Rhodopseudomonas palustris (strain TIE-1).